We begin with the raw amino-acid sequence, 306 residues long: Ribonuclease Z (306 aa).

Histidine 63, histidine 65, aspartate 67, histidine 68, histidine 141, aspartate 211, and histidine 269 together coordinate Zn(2+). Aspartate 67 serves as the catalytic Proton acceptor.

The protein belongs to the RNase Z family. In terms of assembly, homodimer. Zn(2+) serves as cofactor.

The catalysed reaction is Endonucleolytic cleavage of RNA, removing extra 3' nucleotides from tRNA precursor, generating 3' termini of tRNAs. A 3'-hydroxy group is left at the tRNA terminus and a 5'-phosphoryl group is left at the trailer molecule.. Zinc phosphodiesterase, which displays some tRNA 3'-processing endonuclease activity. Probably involved in tRNA maturation, by removing a 3'-trailer from precursor tRNA. The sequence is that of Ribonuclease Z from Staphylococcus haemolyticus (strain JCSC1435).